A 319-amino-acid polypeptide reads, in one-letter code: HTH-type transcriptional regulator YidZ (319 aa).

One can recognise an HTH lysR-type domain in the interval 8–65 (LDLNLLLCLQLLMQERSVTKAAKRMNVTPSAVSKSLAKLRAWFDDPLFVNTPLGLAPT). Positions 25–44 (VTKAAKRMNVTPSAVSKSLA) form a DNA-binding region, H-T-H motif.

It belongs to the LysR transcriptional regulatory family.

Its function is as follows. Involved in anaerobic NO protection. This is HTH-type transcriptional regulator YidZ from Salmonella typhi.